Here is a 306-residue protein sequence, read N- to C-terminus: Homeobox protein Hox-C13a (306 aa).

Positions 236–295 (GRKKRVPYTKIQLKELEKEYAASKFITKDKRRRISATTNLSERQVTIWFQNRRVKEKKFV) form a DNA-binding region, homeobox.

Belongs to the Abd-B homeobox family.

It is found in the nucleus. Sequence-specific transcription factor which is part of a developmental regulatory system that provides cells with specific positional identities on the anterior-posterior axis. This is Homeobox protein Hox-C13a (hoxc13a) from Danio rerio (Zebrafish).